Consider the following 350-residue polypeptide: Quinone oxidoreductase-like protein 2 (350 aa).

Position 36 is an N6-acetyllysine (lysine 36). Lysine 201 carries the post-translational modification N6-succinyllysine. Residues lysine 302 and lysine 328 each carry the N6-acetyllysine modification.

The protein belongs to the zinc-containing alcohol dehydrogenase family. Quinone oxidoreductase subfamily.

This chain is Quinone oxidoreductase-like protein 2, found in Mus musculus (Mouse).